The sequence spans 116 residues: Orphan antitoxin YagB (116 aa).

Belongs to the CbeA/YafW/YfjZ antitoxin family.

In terms of biological role, putative antitoxin component of a type IV toxin-antitoxin (TA) system; its cognate toxin is unknown. In Escherichia coli (strain K12), this protein is Orphan antitoxin YagB (yagB).